The sequence spans 94 residues: MFQVNEYFNGTVKSIAFSGEEGPATVGVMAPGEYEFGTAKREIMHVVSGALTVKLPGSDNWETFNAGDKFNVPADSKFQLQVKVDTAYLCEYRD.

The protein belongs to the nucleoside phosphorylase PpnP family.

The enzyme catalyses a purine D-ribonucleoside + phosphate = a purine nucleobase + alpha-D-ribose 1-phosphate. The catalysed reaction is adenosine + phosphate = alpha-D-ribose 1-phosphate + adenine. It carries out the reaction cytidine + phosphate = cytosine + alpha-D-ribose 1-phosphate. It catalyses the reaction guanosine + phosphate = alpha-D-ribose 1-phosphate + guanine. The enzyme catalyses inosine + phosphate = alpha-D-ribose 1-phosphate + hypoxanthine. The catalysed reaction is thymidine + phosphate = 2-deoxy-alpha-D-ribose 1-phosphate + thymine. It carries out the reaction uridine + phosphate = alpha-D-ribose 1-phosphate + uracil. It catalyses the reaction xanthosine + phosphate = alpha-D-ribose 1-phosphate + xanthine. Catalyzes the phosphorolysis of diverse nucleosides, yielding D-ribose 1-phosphate and the respective free bases. Can use uridine, adenosine, guanosine, cytidine, thymidine, inosine and xanthosine as substrates. Also catalyzes the reverse reactions. The chain is Pyrimidine/purine nucleoside phosphorylase from Pseudomonas putida (strain ATCC 700007 / DSM 6899 / JCM 31910 / BCRC 17059 / LMG 24140 / F1).